The sequence spans 245 residues: Small ribosomal subunit protein uS2 (245 aa).

It belongs to the universal ribosomal protein uS2 family.

The chain is Small ribosomal subunit protein uS2 from Pseudomonas entomophila (strain L48).